The chain runs to 336 residues: UDP-galactose transporter 1 (336 aa).

9 helical membrane-spanning segments follow: residues 11-31, 38-58, 83-103, 131-151, 154-174, 193-213, 227-247, 254-274, and 278-298; these read LAIL…KWIF, FPLS…YIVI, FVFC…PVSF, IWAS…TELS, MFGF…TILA, APFA…SGIL, IIIL…FYVI, TFNV…WLIF, and ISYM…FYGY.

It belongs to the TPT transporter family. TPT (TC 2.A.7.9) subfamily.

It localises to the membrane. In terms of biological role, nucleotide sugar transporter that specifically transports UDP-galactose. In Arabidopsis thaliana (Mouse-ear cress), this protein is UDP-galactose transporter 1.